We begin with the raw amino-acid sequence, 332 residues long: 4-hydroxythreonine-4-phosphate dehydrogenase (332 aa).

Substrate-binding residues include His138 and Thr139. His168, His213, and His269 together coordinate a divalent metal cation. Positions 277, 286, and 295 each coordinate substrate.

Belongs to the PdxA family. As to quaternary structure, homodimer. It depends on Zn(2+) as a cofactor. The cofactor is Mg(2+). Co(2+) is required as a cofactor.

It localises to the cytoplasm. It carries out the reaction 4-(phosphooxy)-L-threonine + NAD(+) = 3-amino-2-oxopropyl phosphate + CO2 + NADH. It functions in the pathway cofactor biosynthesis; pyridoxine 5'-phosphate biosynthesis; pyridoxine 5'-phosphate from D-erythrose 4-phosphate: step 4/5. In terms of biological role, catalyzes the NAD(P)-dependent oxidation of 4-(phosphooxy)-L-threonine (HTP) into 2-amino-3-oxo-4-(phosphooxy)butyric acid which spontaneously decarboxylates to form 3-amino-2-oxopropyl phosphate (AHAP). In Vibrio parahaemolyticus serotype O3:K6 (strain RIMD 2210633), this protein is 4-hydroxythreonine-4-phosphate dehydrogenase.